We begin with the raw amino-acid sequence, 221 residues long: MFRRLVTPRLLRLRRQQGLSRPYASKAPGSEDLPSAWKMVGVAVVSTLIFVQAAKSIDRSKPQTEFSEAEFEKVRSGLRRRVTVFKPDELEVLAVLADVPVEKIRAPAGARAVRVQQALERFRTDEHDKYHALLEELHAVHGDDYSAHLPKGALVALMGRYLKEVCQAGDSVVLLGFPRNMQEAIQFESEVAVISALVAPQGSEESQLVQYFKTVNKVITV.

The transit peptide at 1 to 23 (MFRRLVTPRLLRLRRQQGLSRPY) directs the protein to the mitochondrion. The chain crosses the membrane as a helical span at residues 36-54 (AWKMVGVAVVSTLIFVQAA).

Belongs to the AIM36 family.

Its subcellular location is the mitochondrion membrane. This chain is Altered inheritance of mitochondria protein 36, mitochondrial (AIM36), found in Eremothecium gossypii (strain ATCC 10895 / CBS 109.51 / FGSC 9923 / NRRL Y-1056) (Yeast).